Reading from the N-terminus, the 208-residue chain is N-(5'-phosphoribosyl)anthranilate isomerase (208 aa).

This sequence belongs to the TrpF family.

It catalyses the reaction N-(5-phospho-beta-D-ribosyl)anthranilate = 1-(2-carboxyphenylamino)-1-deoxy-D-ribulose 5-phosphate. Its pathway is amino-acid biosynthesis; L-tryptophan biosynthesis; L-tryptophan from chorismate: step 3/5. The sequence is that of N-(5'-phosphoribosyl)anthranilate isomerase from Dechloromonas aromatica (strain RCB).